We begin with the raw amino-acid sequence, 446 residues long: Tubulin gamma chain (446 aa).

A GTP-binding site is contributed by 142–148 (AGGTGSG).

The protein belongs to the tubulin family. In terms of assembly, interacts with mto1. Interacts with mto2.

The protein localises to the cytoplasm. Its subcellular location is the cytoskeleton. The protein resides in the microtubule organizing center. It is found in the spindle pole body. In terms of biological role, tubulin is the major constituent of microtubules. The gamma chain is found at microtubule organizing centers (MTOC) such as the spindle poles or the centrosome, suggesting that it is involved in the minus-end nucleation of microtubule assembly. This chain is Tubulin gamma chain, found in Schizosaccharomyces pombe (strain 972 / ATCC 24843) (Fission yeast).